The sequence spans 123 residues: Large ribosomal subunit protein bL12 (123 aa).

The disordered stretch occupies residues 96–123 (NVKEGVSKEEAEGLKKSLEEAGATVELK). The segment covering 100–114 (GVSKEEAEGLKKSLE) has biased composition (basic and acidic residues).

This sequence belongs to the bacterial ribosomal protein bL12 family. In terms of assembly, homodimer. Part of the ribosomal stalk of the 50S ribosomal subunit. Forms a multimeric L10(L12)X complex, where L10 forms an elongated spine to which 2 to 4 L12 dimers bind in a sequential fashion. Binds GTP-bound translation factors.

Forms part of the ribosomal stalk which helps the ribosome interact with GTP-bound translation factors. Is thus essential for accurate translation. This Flavobacterium johnsoniae (strain ATCC 17061 / DSM 2064 / JCM 8514 / BCRC 14874 / CCUG 350202 / NBRC 14942 / NCIMB 11054 / UW101) (Cytophaga johnsonae) protein is Large ribosomal subunit protein bL12.